Consider the following 199-residue polypeptide: MRTSHMLEQLMEALRCLPGVGPKSAQRMAFHLLQRDRKGGLQLADALSQSMTEIGHCAECRTFTEEEVCHICTNPKRQENGQICVVESPADIAAVEATGQYSGRYFVLMGHLSPLDGIGPSDIGLDVLDYRLRRGDISEVILATNPTVEGEATAHYIAELCREHQVEASRIAHGVPVGGELELVDGTTLSHSLLGRHKI.

The C4-type zinc-finger motif lies at C57–C72. Residues G81 to P176 enclose the Toprim domain.

Belongs to the RecR family.

Functionally, may play a role in DNA repair. It seems to be involved in an RecBC-independent recombinational process of DNA repair. It may act with RecF and RecO. This is Recombination protein RecR from Vibrio parahaemolyticus serotype O3:K6 (strain RIMD 2210633).